The sequence spans 684 residues: Galactocerebrosidase (684 aa).

Positions 1-42 are cleaved as a signal peptide; it reads MANSQPKASQQRQAKVMTAAAGSASRVAVPLLLCALLVPGGA. Substrate-binding residues include Thr-109, Trp-151, and Asn-197. Residue Glu-198 is the Proton donor/acceptor of the active site. Glu-274 functions as the Nucleophile in the catalytic mechanism. Cys-287 and Cys-394 are oxidised to a cystine. 2 N-linked (GlcNAc...) asparagine glycosylation sites follow: Asn-300 and Asn-379. Position 396 (Arg-396) interacts with substrate. N-linked (GlcNAc...) asparagine glycosylation is found at Asn-403, Asn-558, Asn-601, and Asn-645.

This sequence belongs to the glycosyl hydrolase 59 family. In terms of tissue distribution, detected in brain and kidney.

It is found in the lysosome. It carries out the reaction a beta-D-galactosyl-(1&lt;-&gt;1')-N-acylsphing-4-enine + H2O = an N-acylsphing-4-enine + D-galactose. The enzyme catalyses a D-galactosylceramide + H2O = an N-acyl-sphingoid base + D-galactose. The catalysed reaction is beta-D-galactosyl-(1&lt;-&gt;1)-sphing-4-enine + H2O = sphing-4-enine + D-galactose. Hydrolyzes the galactose ester bonds of glycolipids such as galactosylceramide and galactosylsphingosine. Enzyme with very low activity responsible for the lysosomal catabolism of galactosylceramide, a major lipid in myelin, kidney and epithelial cells of small intestine and colon. This Mus musculus (Mouse) protein is Galactocerebrosidase.